The sequence spans 118 residues: Ferredoxin-thioredoxin reductase, catalytic chain (118 aa).

Cys56 contacts [4Fe-4S] cluster. Catalysis depends on Cys58, which acts as the Nucleophile. A disulfide bond links Cys58 and Cys88. Positions 75, 77, and 86 each coordinate [4Fe-4S] cluster.

Belongs to the ferredoxin thioredoxin reductase beta subunit family. In terms of assembly, heterodimer of subunit A (variable subunit) and subunit B (catalytic subunit). Heterodimeric FTR forms a complex with ferredoxin and thioredoxin. It depends on [4Fe-4S] cluster as a cofactor.

It carries out the reaction [thioredoxin]-disulfide + 2 reduced [2Fe-2S]-[ferredoxin] + 2 H(+) = [thioredoxin]-dithiol + 2 oxidized [2Fe-2S]-[ferredoxin]. Its function is as follows. Catalytic subunit of the ferredoxin-thioredoxin reductase (FTR), which catalyzes the two-electron reduction of thioredoxins by the electrons provided by reduced ferredoxin. The protein is Ferredoxin-thioredoxin reductase, catalytic chain of Synechocystis sp. (strain ATCC 27184 / PCC 6803 / Kazusa).